Reading from the N-terminus, the 220-residue chain is 7-cyano-7-deazaguanine synthase (220 aa).

10-20 (FSGGQDSTTCL) is a binding site for ATP. 4 residues coordinate Zn(2+): Cys188, Cys197, Cys200, and Cys203.

It belongs to the QueC family. Zn(2+) serves as cofactor.

The catalysed reaction is 7-carboxy-7-deazaguanine + NH4(+) + ATP = 7-cyano-7-deazaguanine + ADP + phosphate + H2O + H(+). It functions in the pathway purine metabolism; 7-cyano-7-deazaguanine biosynthesis. Catalyzes the ATP-dependent conversion of 7-carboxy-7-deazaguanine (CDG) to 7-cyano-7-deazaguanine (preQ(0)). The sequence is that of 7-cyano-7-deazaguanine synthase from Neisseria meningitidis serogroup C (strain 053442).